We begin with the raw amino-acid sequence, 195 residues long: Capsid protein (195 aa).

A disordered region spans residues 148–195 (NAPILSTLPETTVVRRRGRSPRRRTPSPRRRRSPSPRRRRSQSRESQC). The span at 161-188 (VRRRGRSPRRRTPSPRRRRSPSPRRRRS) shows a compositional bias: basic residues. A phosphoserine; by host mark is found at serine 167, serine 174, and serine 182. A 1; half-length repeat occupies 167–172 (SPRRRT). Positions 167-188 (SPRRRTPSPRRRRSPSPRRRRS) are 3 X 7 AA repeats of S-P-R-R-R-[PR]-S. The Bipartite nuclear localization signal motif lies at 170–187 (RRTPSPRRRRSPSPRRRR). A run of 2 repeats spans residues 174–180 (SPRRRRS) and 182–188 (SPRRRRS). Residues 189–195 (QSRESQC) are RNA binding.

The protein belongs to the orthohepadnavirus core antigen family. As to quaternary structure, homodimerizes, then multimerizes. Interacts with cytosol exposed regions of viral L glycoprotein present in the reticulum-to-Golgi compartment. Interacts with human FLNB. Phosphorylated form interacts with host importin alpha; this interaction depends on the exposure of the NLS, which itself depends upon genome maturation and/or phosphorylation of the capsid protein. Interacts with host NUP153. In terms of processing, phosphorylated by host SRPK1, SRPK2, and maybe protein kinase C or GAPDH. Phosphorylation is critical for pregenomic RNA packaging. Protein kinase C phosphorylation is stimulated by HBx protein and may play a role in transport of the viral genome to the nucleus at the late step during the viral replication cycle.

Its subcellular location is the virion. The protein resides in the host cytoplasm. In terms of biological role, self assembles to form an icosahedral capsid. Most capsids appear to be large particles with an icosahedral symmetry of T=4 and consist of 240 copies of capsid protein, though a fraction forms smaller T=3 particles consisting of 180 capsid proteins. Entering capsids are transported along microtubules to the nucleus. Phosphorylation of the capsid is thought to induce exposure of nuclear localization signal in the C-terminal portion of the capsid protein that allows binding to the nuclear pore complex via the importin (karyopherin-) alpha and beta. Capsids are imported in intact form through the nuclear pore into the nuclear basket, where it probably binds NUP153. Only capsids that contain the mature viral genome can release the viral DNA and capsid protein into the nucleoplasm. Immature capsids get stuck in the basket. Capsids encapsulate the pre-genomic RNA and the P protein. Pre-genomic RNA is reverse-transcribed into DNA while the capsid is still in the cytoplasm. The capsid can then either be directed to the nucleus, providing more genomes for transcription, or bud through the endoplasmic reticulum to provide new virions. This chain is Capsid protein, found in Homo sapiens (Human).